A 63-amino-acid chain; its full sequence is Large ribosomal subunit protein bL35 (63 aa).

It belongs to the bacterial ribosomal protein bL35 family.

This is Large ribosomal subunit protein bL35 from Finegoldia magna (strain ATCC 29328 / DSM 20472 / WAL 2508) (Peptostreptococcus magnus).